An 84-amino-acid polypeptide reads, in one-letter code: Cell division topological specificity factor (84 aa).

The protein belongs to the MinE family.

Functionally, prevents the cell division inhibition by proteins MinC and MinD at internal division sites while permitting inhibition at polar sites. This ensures cell division at the proper site by restricting the formation of a division septum at the midpoint of the long axis of the cell. This Pseudomonas putida (strain W619) protein is Cell division topological specificity factor.